A 217-amino-acid chain; its full sequence is Flagellin B1 (217 aa).

A propeptide spanning residues 1–12 (MKVFEFLKGKRG) is cleaved from the precursor.

It belongs to the archaeal flagellin family.

Its subcellular location is the archaeal flagellum. Functionally, flagellin is the subunit protein which polymerizes to form the filaments of archaeal flagella. This is Flagellin B1 (flaB1) from Methanocaldococcus jannaschii (strain ATCC 43067 / DSM 2661 / JAL-1 / JCM 10045 / NBRC 100440) (Methanococcus jannaschii).